A 102-amino-acid chain; its full sequence is Small ribosomal subunit protein uS10 (102 aa).

Positions 37–61 (PIPLPTKSLKITTRKSTDGEGSSSF) are disordered.

The protein belongs to the universal ribosomal protein uS10 family. Part of the 30S ribosomal subunit.

Functionally, involved in the binding of tRNA to the ribosomes. This Methanococcus vannielii (strain ATCC 35089 / DSM 1224 / JCM 13029 / OCM 148 / SB) protein is Small ribosomal subunit protein uS10.